Here is a 365-residue protein sequence, read N- to C-terminus: MAKQTPLYDQHVACGARMVDFHGWMMPLHYGSQIDEHHLVRQDAGMFDVSHMTIVDLHGNRTREFLRYLLANDVAKLTQPGKALYTGMLNESGGVIDDLIVYFLSEDYFRLVVNSATRDKDLAWISQHAEPYQVEVTVRDDLALIAVQGPQAQQKVATLLTTEQQQAIAGMKPFFGIQTGDLFIATTGYTGEAGYEIALPKQQVVAFWQQLLAAGVKPAGLGARDTLRLEAGMNLYGQEMDEKTSPLAANMGWTVAWQPEDRQFIGRAALERQRMKGTEQLVGLIMTEKGVLRNELPVYFFDAAGNQHVGVITSGSFSPTLGFSIALARVPAGIGEHAVVQIRNREMPVRVTKPGFVRAGKAIVL.

Belongs to the GcvT family. The glycine cleavage system is composed of four proteins: P, T, L and H.

The catalysed reaction is N(6)-[(R)-S(8)-aminomethyldihydrolipoyl]-L-lysyl-[protein] + (6S)-5,6,7,8-tetrahydrofolate = N(6)-[(R)-dihydrolipoyl]-L-lysyl-[protein] + (6R)-5,10-methylene-5,6,7,8-tetrahydrofolate + NH4(+). Its function is as follows. The glycine cleavage system catalyzes the degradation of glycine. The protein is Aminomethyltransferase of Yersinia pseudotuberculosis serotype O:1b (strain IP 31758).